Here is a 478-residue protein sequence, read N- to C-terminus: UDP-N-acetylmuramate--L-alanine ligase (478 aa).

122 to 128 (GTHGKTT) contacts ATP.

It belongs to the MurCDEF family.

It localises to the cytoplasm. It carries out the reaction UDP-N-acetyl-alpha-D-muramate + L-alanine + ATP = UDP-N-acetyl-alpha-D-muramoyl-L-alanine + ADP + phosphate + H(+). It participates in cell wall biogenesis; peptidoglycan biosynthesis. In terms of biological role, cell wall formation. The chain is UDP-N-acetylmuramate--L-alanine ligase from Stenotrophomonas maltophilia (strain K279a).